Consider the following 112-residue polypeptide: Urocortin-2 (112 aa).

Positions 1–22 are cleaved as a signal peptide; it reads MTRCALLLLMVLMLGRVLVVPV. Positions 23-70 are excised as a propeptide; that stretch reads TPIPTFQLRPQNSPQTTPRPAASESPSAAPTWPWAAQSHCSPTRHPGS. The interval 27–66 is disordered; it reads TFQLRPQNSPQTTPRPAASESPSAAPTWPWAAQSHCSPTR. The segment covering 38–58 has biased composition (low complexity); the sequence is TTPRPAASESPSAAPTWPWAA.

This sequence belongs to the sauvagine/corticotropin-releasing factor/urotensin I family. Binds with high affinity to CRF receptors 2-alpha and 2-beta. In terms of processing, glycosylated.

It is found in the secreted. In terms of biological role, suppresses food intake, delays gastric emptying and decreases heat-induced edema. Might represent an endogenous ligand for maintaining homeostasis after stress. The chain is Urocortin-2 (UCN2) from Homo sapiens (Human).